The following is a 369-amino-acid chain: Dihydroorotate dehydrogenase (quinone) (369 aa).

Residues 76 to 80 and T100 contribute to the FMN site; that span reads AGLDK. K80 is a substrate binding site. Residue 125-129 coordinates substrate; that stretch reads NRMGF. N154 and N187 together coordinate FMN. N187 contacts substrate. Catalysis depends on S190, which acts as the Nucleophile. Residue N192 coordinates substrate. K232 and S260 together coordinate FMN. 261-262 is a binding site for substrate; it reads NT. FMN is bound by residues G282, G311, and 332–333; that span reads YS.

Belongs to the dihydroorotate dehydrogenase family. Type 2 subfamily. As to quaternary structure, monomer. FMN serves as cofactor.

It localises to the cell membrane. The enzyme catalyses (S)-dihydroorotate + a quinone = orotate + a quinol. The protein operates within pyrimidine metabolism; UMP biosynthesis via de novo pathway; orotate from (S)-dihydroorotate (quinone route): step 1/1. In terms of biological role, catalyzes the conversion of dihydroorotate to orotate with quinone as electron acceptor. This Deinococcus radiodurans (strain ATCC 13939 / DSM 20539 / JCM 16871 / CCUG 27074 / LMG 4051 / NBRC 15346 / NCIMB 9279 / VKM B-1422 / R1) protein is Dihydroorotate dehydrogenase (quinone) (pyrD).